A 498-amino-acid polypeptide reads, in one-letter code: Probable FAD-binding monooxygenase AlmA (498 aa).

Residues 4–24 form a helical membrane-spanning segment; it reads HIDILIVGAGISGIGIAAHLS. The FAD site is built by Ser-15, Glu-36, Asp-56, Phe-62, and Val-104. An NADP(+)-binding site is contributed by 54–56; the sequence is RSD. NADP(+) is bound by residues 184-190, 208-209, and 292-293; these read SGATAIT, RS, and RL. Val-395 is an FAD binding site.

Belongs to the FAD-binding monooxygenase family. FAD is required as a cofactor.

Its subcellular location is the cell membrane. Its pathway is hydrocarbon metabolism; alkane degradation. Its function is as follows. Is able to catalyze the degradation of n-alkanes with C chain lengths of 32 and 36. Probably allows Acinetobacter baylyi strain ADP1 to grow on the long-chain n-alkane dotriacontane (C32H66) as a sole carbon source. The protein is Probable FAD-binding monooxygenase AlmA of Acinetobacter baylyi (strain ATCC 33305 / BD413 / ADP1).